The sequence spans 242 residues: Ribonuclease 3 (242 aa).

In terms of domain architecture, RNase III spans 7 to 136 (LEALQNLLGY…LLASIYLDGG (130 aa)). Glutamate 49 contacts Mg(2+). The active site involves aspartate 53. Aspartate 122 and glutamate 125 together coordinate Mg(2+). Glutamate 125 is an active-site residue. The 70-residue stretch at 167–236 (DYKTQLQELT…AEKALQIIAA (70 aa)) folds into the DRBM domain.

Belongs to the ribonuclease III family. In terms of assembly, homodimer. Mg(2+) serves as cofactor.

The protein resides in the cytoplasm. It catalyses the reaction Endonucleolytic cleavage to 5'-phosphomonoester.. Digests double-stranded RNA. Involved in the processing of primary rRNA transcript to yield the immediate precursors to the large and small rRNAs (23S and 16S). Processes some mRNAs, and tRNAs when they are encoded in the rRNA operon. Processes pre-crRNA and tracrRNA of type II CRISPR loci if present in the organism. The sequence is that of Ribonuclease 3 from Syntrophobacter fumaroxidans (strain DSM 10017 / MPOB).